A 284-amino-acid polypeptide reads, in one-letter code: Probable endonuclease 4 (284 aa).

The Zn(2+) site is built by histidine 69, histidine 109, glutamate 145, aspartate 179, histidine 182, histidine 216, aspartate 229, histidine 231, and glutamate 261.

Belongs to the AP endonuclease 2 family. Zn(2+) serves as cofactor.

It carries out the reaction Endonucleolytic cleavage to 5'-phosphooligonucleotide end-products.. Its function is as follows. Endonuclease IV plays a role in DNA repair. It cleaves phosphodiester bonds at apurinic or apyrimidinic (AP) sites, generating a 3'-hydroxyl group and a 5'-terminal sugar phosphate. This chain is Probable endonuclease 4, found in Klebsiella pneumoniae subsp. pneumoniae (strain ATCC 700721 / MGH 78578).